The chain runs to 269 residues: Putative pyruvate, phosphate dikinase regulatory protein (269 aa).

153 to 160 (GVSRTSKT) contacts ADP.

The protein belongs to the pyruvate, phosphate/water dikinase regulatory protein family. PDRP subfamily.

It catalyses the reaction N(tele)-phospho-L-histidyl/L-threonyl-[pyruvate, phosphate dikinase] + ADP = N(tele)-phospho-L-histidyl/O-phospho-L-threonyl-[pyruvate, phosphate dikinase] + AMP + H(+). The catalysed reaction is N(tele)-phospho-L-histidyl/O-phospho-L-threonyl-[pyruvate, phosphate dikinase] + phosphate + H(+) = N(tele)-phospho-L-histidyl/L-threonyl-[pyruvate, phosphate dikinase] + diphosphate. Its function is as follows. Bifunctional serine/threonine kinase and phosphorylase involved in the regulation of the pyruvate, phosphate dikinase (PPDK) by catalyzing its phosphorylation/dephosphorylation. The sequence is that of Putative pyruvate, phosphate dikinase regulatory protein from Pediococcus pentosaceus (strain ATCC 25745 / CCUG 21536 / LMG 10740 / 183-1w).